A 512-amino-acid chain; its full sequence is Cytochrome P450 monooxygenase astB (512 aa).

Residues 5-25 (DLSFPAAIGAVFGAVAISVAA) traverse the membrane as a helical segment. Cys-452 provides a ligand contact to heme.

This sequence belongs to the cytochrome P450 family. The cofactor is heme.

It localises to the membrane. It participates in secondary metabolite biosynthesis; terpenoid biosynthesis. Its function is as follows. Cytochrome P450 monooxygenase; part of the gene cluster that mediates the biosynthesis of the sesquiterpenoid aspterric acid (AA), an inhibitor of dihydroxy-acid dehydratase (DHAD) effective as an herbicide. AstB catalyzes the second step within the pathway and converts (-)-daucane produced by the terpene cyclase astA into an alpha-epoxy carboxylate intermediate which is further converted into the tricyclic aspterric acid by the cytochrome P450 monooxygenase astC. The chain is Cytochrome P450 monooxygenase astB from Aspergillus terreus (strain NIH 2624 / FGSC A1156).